We begin with the raw amino-acid sequence, 274 residues long: Proliferating cell nuclear antigen 1 (274 aa).

A DNA-binding region spans residues arginine 61–lysine 80.

This sequence belongs to the PCNA family. As to quaternary structure, homotrimer. Interacts with ORC1 (via PIP-box motif); the interaction occurs during DNA replication in trophozoites. Interacts with ORC5; the interaction occurs during the trophozoite stage but not at the late schizont stage. Interacts with FEN1.

It is found in the nucleus. Its subcellular location is the chromosome. The protein localises to the cytoplasm. Auxiliary protein of DNA polymerase delta and is involved in the control of DNA replication by increasing the polymerase processibility during elongation of the leading strand. Involved in DNA damage response. The protein is Proliferating cell nuclear antigen 1 of Plasmodium falciparum (isolate 3D7).